We begin with the raw amino-acid sequence, 115 residues long: Con-Ins T2 (115 aa).

A signal peptide spans 1–21 (MTTSFYFLLVALGLLLYVCQS). Residues 22–29 (SFGNQHTR) constitute a propeptide that is removed on maturation. Disulfide bonds link C38–C101, C50–C114, and C100–C105. Position 48 is a 4-carboxyglutamate (E48). Positions 53-94 (KRNDAGKKRGQASPLWQRGGSLSMLKARAKRNEAFHLQRAHR) are cleaved as a propeptide — c peptide. Position 98 is a 4-carboxyglutamate (E98). E109 carries the 4-carboxyglutamate modification. C114 bears the Cysteine amide mark.

The protein belongs to the insulin family. In terms of assembly, heterodimer of A and B chains; disulfide-linked. In terms of tissue distribution, expressed by the venom gland.

It localises to the secreted. Functionally, this venom insulin facilitates prey capture by rapidly inducing hypoglycemic shock. It is one of the smallest known insulin found in nature and lacks the C-terminal segment of the B chain that, in human insulin, mediates engagement of the insulin receptor (INSR) and assembly of the hormone's hexameric storage form. Despite lacking this segment, it both binds and activates human insulin receptor (long isoform (HIR-B)) with a high potency (EC(50)=15.5 nM). In vivo, intraperitoneal injection of this peptide into zebrafish lowers blood glucose with a lower potency than human insulin. In addition, when applied to water, this peptide reduces overall locomotor activity of zebrafish larvae, observed as a significant decrease in the percentage of time spent swimming and movement frequency. When tested on a mouse model of diabetes, this insulin also lowers blood glucose with a 10-fold lower potency than human insulin. The chain is Con-Ins T2 from Conus tulipa (Fish-hunting cone snail).